Here is a 257-residue protein sequence, read N- to C-terminus: MLNFIRSDKDKGKGNDNDINFSNIPKHIAIIMDGNGRWAKKRNLPRTMGHKAGGEALKRIVRECSDIGVKYLTVYGFSTENWIRPKEEVNAIMRLIVEFLKREFNELNKNNVIINPIGNILGLPEACITALNDAKNKTKNNTGLMLNLALNYGGRDEILNAVKNIFASYEENKISKDEIFNLSDEEFSSYLYTGCIPDPDIIIRPSGEKRLSNFLLWQCAYSEFWYSNINWPDFSIEDLHTAIKDYQNRDRRFGGVK.

Asp-33 is an active-site residue. Residue Asp-33 coordinates Mg(2+). Residues 34 to 37 (GNGR), Trp-38, Arg-46, His-50, and 78 to 80 (STE) each bind substrate. The active-site Proton acceptor is Asn-81. Residues Trp-82, Arg-84, Arg-204, and 210 to 212 (RLS) each bind substrate. Residue Glu-223 participates in Mg(2+) binding.

It belongs to the UPP synthase family. As to quaternary structure, homodimer. Requires Mg(2+) as cofactor.

In terms of biological role, catalyzes the condensation of isopentenyl diphosphate (IPP) with allylic pyrophosphates generating different type of terpenoids. The chain is Isoprenyl transferase from Clostridium acetobutylicum (strain ATCC 824 / DSM 792 / JCM 1419 / IAM 19013 / LMG 5710 / NBRC 13948 / NRRL B-527 / VKM B-1787 / 2291 / W).